A 390-amino-acid polypeptide reads, in one-letter code: 8-amino-7-oxononanoate synthase (390 aa).

Residue Arg19 coordinates substrate. Residue 106–107 (GY) coordinates pyridoxal 5'-phosphate. Residue His131 coordinates substrate. Pyridoxal 5'-phosphate-binding residues include Ser176, His204, and Thr233. Lys236 carries the N6-(pyridoxal phosphate)lysine modification. Thr350 is a binding site for substrate.

The protein belongs to the class-II pyridoxal-phosphate-dependent aminotransferase family. BioF subfamily. As to quaternary structure, homodimer. Pyridoxal 5'-phosphate is required as a cofactor.

It carries out the reaction 6-carboxyhexanoyl-[ACP] + L-alanine + H(+) = (8S)-8-amino-7-oxononanoate + holo-[ACP] + CO2. The protein operates within cofactor biosynthesis; biotin biosynthesis. In terms of biological role, catalyzes the decarboxylative condensation of pimeloyl-[acyl-carrier protein] and L-alanine to produce 8-amino-7-oxononanoate (AON), [acyl-carrier protein], and carbon dioxide. This is 8-amino-7-oxononanoate synthase from Pseudomonas putida (strain ATCC 700007 / DSM 6899 / JCM 31910 / BCRC 17059 / LMG 24140 / F1).